The sequence spans 250 residues: MEQNKCALVTGSSRGVGKAAAIRLAENGYNIVINYARSKKAALETAEEIEKLGVKVLVVKANVGQPAKIKEMFQQIDETFGRLDVFVNNAASGVLRPVMELEETHWDWTMNINAKALLFCAQEAAKLMEKNGGGHIVSISSLGSIRYLENYTTVGVSKAALEALTRYLAVELSPKQIIVNAVSGGAIDTDALKHFPNREDLLEDARQNTPAGRMVEIKDMVDTVEFLVSSKADMIRGQTIIVDGGRSLLV.

NADP(+)-binding positions include 13-16, 36-38, 62-63, and Asn-89; these read SRGV, ARS, and NV. Active-site proton acceptor residues include Tyr-151 and Lys-158. NADP(+) is bound by residues Lys-158 and 187–189; that span reads IDT.

It belongs to the short-chain dehydrogenases/reductases (SDR) family. Homotetramer.

It carries out the reaction a 2,3-saturated acyl-[ACP] + NADP(+) = a (2E)-enoyl-[ACP] + NADPH + H(+). It catalyses the reaction (2E)-butenoyl-[ACP] + NADPH + H(+) = butanoyl-[ACP] + NADP(+). The protein operates within lipid metabolism; fatty acid biosynthesis. Inhibited by triclosan. In terms of biological role, catalyzes the reduction of a carbon-carbon double bond in an enoyl moiety that is covalently linked to an acyl carrier protein (ACP). It confers resistance to triclosan. This chain is Enoyl-[acyl-carrier-protein] reductase [NADPH] FabL (fabL), found in Bacillus subtilis (strain 168).